The chain runs to 60 residues: Large ribosomal subunit protein bL32 (60 aa).

Positions 1 to 60 (MAVQQNKKSPSKRGMHRSHNALTVPGIAVEPTTGETHLRHHISPNGFYRGRQVLKNKSEA) are disordered. The span at 9–19 (SPSKRGMHRSH) shows a compositional bias: basic residues.

The protein belongs to the bacterial ribosomal protein bL32 family.

This is Large ribosomal subunit protein bL32 from Paracidovorax citrulli (strain AAC00-1) (Acidovorax citrulli).